The sequence spans 442 residues: ATP-dependent RNA helicase SUB2-2 (442 aa).

The Q motif motif lies at 58–86 (TGFKDFLLKPELARAIIDCGFEHPSEVQQ). In terms of domain architecture, Helicase ATP-binding spans 89–264 (IPQSIHGTDV…RRFLQNPLEI (176 aa)). Residue 102–109 (AKSGLGKT) participates in ATP binding. The DECD box signature appears at 211-214 (DECD). Residues 292–437 (KLAQLLDDLE…EFPEEGIDPS (146 aa)) form the Helicase C-terminal domain.

It belongs to the DEAD box helicase family. DECD subfamily.

The protein resides in the nucleus. The catalysed reaction is ATP + H2O = ADP + phosphate + H(+). ATP-binding RNA helicase involved in transcription elongation and required for the export of mRNA out of the nucleus. SUB2 also plays a role in pre-mRNA splicing and spliceosome assembly. May be involved in rDNA and telomeric silencing, and maintenance of genome integrity. This chain is ATP-dependent RNA helicase SUB2-2 (SUB2-2), found in Vanderwaltozyma polyspora (strain ATCC 22028 / DSM 70294 / BCRC 21397 / CBS 2163 / NBRC 10782 / NRRL Y-8283 / UCD 57-17) (Kluyveromyces polysporus).